A 403-amino-acid polypeptide reads, in one-letter code: Chromatin structure-remodeling complex subunit SFH1 (403 aa).

The segment at 58–115 (FPTFDIDSDSNDEEQSSASAGNDDPQANANGGEAAGVNGQGSGDGGSANTGAGRHGKS) is disordered. Positions 63-72 (IDSDSNDEEQ) are enriched in acidic residues. Over residues 84 to 94 (ANANGGEAAGV) the composition is skewed to low complexity. A compositionally biased stretch (gly residues) spans 95-105 (NGQGSGDGGSA).

Belongs to the SNF5 family.

It localises to the nucleus. Part of the chromatin structure-remodeling complex (RSC) which is involved in transcription regulation and nucleosome positioning. RSC is responsible for the transfer of a histone octamer from a nucleosome core particle to naked DNA. The reaction requires ATP and involves an activated RSC-nucleosome intermediate. Remodeling reaction also involves DNA translocation, DNA twist and conformational change. As a reconfigurer of centromeric and flanking nucleosomes, RSC complex is required both for proper kinetochore function in chromosome segregation and, via a PKC1-dependent signaling pathway, for organization of the cellular cytoskeleton. This subunit is essential for mitotic growth and required for cell cycle progression. The sequence is that of Chromatin structure-remodeling complex subunit SFH1 (SFH1) from Candida glabrata (strain ATCC 2001 / BCRC 20586 / JCM 3761 / NBRC 0622 / NRRL Y-65 / CBS 138) (Yeast).